The sequence spans 111 residues: Large ribosomal subunit protein uL22 (111 aa).

This sequence belongs to the universal ribosomal protein uL22 family. In terms of assembly, part of the 50S ribosomal subunit.

Its function is as follows. This protein binds specifically to 23S rRNA; its binding is stimulated by other ribosomal proteins, e.g. L4, L17, and L20. It is important during the early stages of 50S assembly. It makes multiple contacts with different domains of the 23S rRNA in the assembled 50S subunit and ribosome. The globular domain of the protein is located near the polypeptide exit tunnel on the outside of the subunit, while an extended beta-hairpin is found that lines the wall of the exit tunnel in the center of the 70S ribosome. The sequence is that of Large ribosomal subunit protein uL22 from Chlamydia trachomatis serovar L2b (strain UCH-1/proctitis).